The chain runs to 98 residues: UPF0213 protein in ldhD 5'region (98 aa).

The region spanning 7-84 (NGFYFYVLWC…KKQSRKEKLK (78 aa)) is the GIY-YIG domain.

Belongs to the UPF0213 family.

This chain is UPF0213 protein in ldhD 5'region, found in Pediococcus acidilactici.